Consider the following 376-residue polypeptide: Cytoplasmic tRNA 2-thiolation protein 1 (376 aa).

Belongs to the TtcA family. CTU1/NCS6/ATPBD3 subfamily.

Its subcellular location is the cytoplasm. It participates in tRNA modification; 5-methoxycarbonylmethyl-2-thiouridine-tRNA biosynthesis. Its function is as follows. Plays a central role in 2-thiolation of mcm(5)S(2)U at tRNA wobble positions of tRNA(Lys), tRNA(Glu) and tRNA(Gln). Directly binds tRNAs and probably acts by catalyzing adenylation of tRNAs, an intermediate required for 2-thiolation. It is unclear whether it acts as a sulfurtransferase that transfers sulfur from thiocarboxylated URM1 onto the uridine of tRNAs at wobble position. Prior mcm(5) tRNA modification by the elongator complex is required for 2-thiolation. May also be involved in protein urmylation. The protein is Cytoplasmic tRNA 2-thiolation protein 1 of Scheffersomyces stipitis (strain ATCC 58785 / CBS 6054 / NBRC 10063 / NRRL Y-11545) (Yeast).